A 151-amino-acid chain; its full sequence is Transcriptional regulator MraZ (151 aa).

SpoVT-AbrB domains are found at residues 5 to 52 (ANAI…PLSE) and 81 to 124 (AVDL…DEDA).

It belongs to the MraZ family. In terms of assembly, forms oligomers.

Its subcellular location is the cytoplasm. The protein localises to the nucleoid. The chain is Transcriptional regulator MraZ from Pseudomonas syringae pv. syringae (strain B728a).